A 237-amino-acid chain; its full sequence is Methylosome subunit pICln (237 aa).

S2 bears the N-acetylserine mark. A phosphoserine mark is found at S102, S144, S193, and S195. At T223 the chain carries Phosphothreonine.

The protein belongs to the pICln (TC 1.A.47) family. As to quaternary structure, component of the methylosome, a 20S complex containing at least PRMT5/SKB1, WDR77/MEP50 and CLNS1A/pICln. May mediate SNRPD1 and SNRPD3 methylation. Forms a 6S pICln-Sm complex composed of CLNS1A/pICln, SNRPD1, SNRPD2, SNRPE, SNRPF and SNRPG; ring-like structure where CLNS1A/pICln mimics additional Sm proteins and which is unable to assemble into the core snRNP. Interacts with LSM10 and LSM11.

It localises to the cytoplasm. It is found in the cytosol. The protein resides in the nucleus. Its subcellular location is the cytoskeleton. Functionally, involved in both the assembly of spliceosomal snRNPs and the methylation of Sm proteins. Chaperone that regulates the assembly of spliceosomal U1, U2, U4 and U5 small nuclear ribonucleoproteins (snRNPs), the building blocks of the spliceosome, and thereby plays an important role in the splicing of cellular pre-mRNAs. Most spliceosomal snRNPs contain a common set of Sm proteins SNRPB, SNRPD1, SNRPD2, SNRPD3, SNRPE, SNRPF and SNRPG that assemble in a heptameric protein ring on the Sm site of the small nuclear RNA to form the core snRNP (Sm core). In the cytosol, the Sm proteins SNRPD1, SNRPD2, SNRPE, SNRPF and SNRPG are trapped in an inactive 6S pICln-Sm complex by the chaperone CLNS1A that controls the assembly of the core snRNP. Dissociation by the SMN complex of CLNS1A from the trapped Sm proteins and their transfer to an SMN-Sm complex triggers the assembly of core snRNPs and their transport to the nucleus. The protein is Methylosome subunit pICln (CLNS1A) of Pongo abelii (Sumatran orangutan).